The chain runs to 428 residues: Histidine--tRNA ligase (428 aa).

It belongs to the class-II aminoacyl-tRNA synthetase family. As to quaternary structure, homodimer.

It is found in the cytoplasm. The enzyme catalyses tRNA(His) + L-histidine + ATP = L-histidyl-tRNA(His) + AMP + diphosphate + H(+). The chain is Histidine--tRNA ligase from Staphylococcus carnosus (strain TM300).